We begin with the raw amino-acid sequence, 213 residues long: Uracil phosphoribosyltransferase (213 aa).

5-phospho-alpha-D-ribose 1-diphosphate contacts are provided by residues arginine 78, arginine 103, and 130 to 138 (DPMLATGGS). Uracil-binding positions include isoleucine 197 and 202–204 (GDA). Aspartate 203 contacts 5-phospho-alpha-D-ribose 1-diphosphate.

The protein belongs to the UPRTase family. Mg(2+) is required as a cofactor.

It catalyses the reaction UMP + diphosphate = 5-phospho-alpha-D-ribose 1-diphosphate + uracil. It functions in the pathway pyrimidine metabolism; UMP biosynthesis via salvage pathway; UMP from uracil: step 1/1. Its activity is regulated as follows. Allosterically activated by GTP. Functionally, catalyzes the conversion of uracil and 5-phospho-alpha-D-ribose 1-diphosphate (PRPP) to UMP and diphosphate. This is Uracil phosphoribosyltransferase from Cutibacterium acnes (strain DSM 16379 / KPA171202) (Propionibacterium acnes).